The sequence spans 214 residues: CASP-like protein 0U1 (214 aa).

At 1 to 82 (MATSEAPLLK…GFTSFYQFKG (82 aa)) the chain is on the cytoplasmic side. Residues 83–103 (VVGVYAAFWVYTVLLIGLYLF) form a helical membrane-spanning segment. Residues 104-112 (SRGPPPGTE) lie on the Extracellular side of the membrane. The chain crosses the membrane as a helical span at residues 113-133 (FVVHALFTLCMIAFVSLSVIS). At 134–153 (CTSTVIESDYSVCKNAAYAK) the chain is on the cytoplasmic side. A helical membrane pass occupies residues 154 to 174 (ASLVFAALVVVLNCATCAFVF). The Extracellular portion of the chain corresponds to 175–214 (KQWRSLQFVGMPENFRPFGRHRHKHGHHAGDADDAIPTHP). The interval 194–214 (RHRHKHGHHAGDADDAIPTHP) is disordered.

It belongs to the Casparian strip membrane proteins (CASP) family. As to quaternary structure, homodimer and heterodimers.

The protein localises to the cell membrane. This Ostreococcus tauri protein is CASP-like protein 0U1.